The sequence spans 302 residues: Succinate--CoA ligase [ADP-forming] subunit alpha (302 aa).

Residues 17–20, Lys-43, and 96–98 contribute to the CoA site; these read TGST and ITE. Residue Tyr-159 participates in substrate binding. His-247 serves as the catalytic Tele-phosphohistidine intermediate.

The protein belongs to the succinate/malate CoA ligase alpha subunit family. In terms of assembly, heterotetramer of two alpha and two beta subunits.

It carries out the reaction succinate + ATP + CoA = succinyl-CoA + ADP + phosphate. The enzyme catalyses GTP + succinate + CoA = succinyl-CoA + GDP + phosphate. The protein operates within carbohydrate metabolism; tricarboxylic acid cycle; succinate from succinyl-CoA (ligase route): step 1/1. Succinyl-CoA synthetase functions in the citric acid cycle (TCA), coupling the hydrolysis of succinyl-CoA to the synthesis of either ATP or GTP and thus represents the only step of substrate-level phosphorylation in the TCA. The alpha subunit of the enzyme binds the substrates coenzyme A and phosphate, while succinate binding and nucleotide specificity is provided by the beta subunit. The polypeptide is Succinate--CoA ligase [ADP-forming] subunit alpha (Staphylococcus aureus (strain MRSA252)).